Reading from the N-terminus, the 352-residue chain is Peptide chain release factor 1 (352 aa).

Glutamine 233 is modified (N5-methylglutamine). Residues 288–309 (NAKDRKEQVGSGDRSERIRTYN) are disordered. The segment covering 289-306 (AKDRKEQVGSGDRSERIR) has biased composition (basic and acidic residues).

This sequence belongs to the prokaryotic/mitochondrial release factor family. Methylated by PrmC. Methylation increases the termination efficiency of RF1.

The protein localises to the cytoplasm. In terms of biological role, peptide chain release factor 1 directs the termination of translation in response to the peptide chain termination codons UAG and UAA. The polypeptide is Peptide chain release factor 1 (Helicobacter pylori (strain Shi470)).